Reading from the N-terminus, the 226-residue chain is PKHD-type hydroxylase Bpet2704 (226 aa).

In terms of domain architecture, Fe2OG dioxygenase spans 78 to 178 (KIFPPLFNRY…RISAFFWMQS (101 aa)). 3 residues coordinate Fe cation: H96, D98, and H159. R169 provides a ligand contact to 2-oxoglutarate.

Fe(2+) is required as a cofactor. Requires L-ascorbate as cofactor.

The protein is PKHD-type hydroxylase Bpet2704 of Bordetella petrii (strain ATCC BAA-461 / DSM 12804 / CCUG 43448).